The following is a 371-amino-acid chain: tRNA 2-selenouridine synthase (371 aa).

One can recognise a Rhodanese domain in the interval 14–137 (FLDDVPLIDL…MRRFLIDTLD (124 aa)). C97 (S-selanylcysteine intermediate) is an active-site residue.

This sequence belongs to the SelU family. In terms of assembly, monomer.

The catalysed reaction is 5-methylaminomethyl-2-thiouridine(34) in tRNA + selenophosphate + (2E)-geranyl diphosphate + H2O + H(+) = 5-methylaminomethyl-2-selenouridine(34) in tRNA + (2E)-thiogeraniol + phosphate + diphosphate. It carries out the reaction 5-methylaminomethyl-2-thiouridine(34) in tRNA + (2E)-geranyl diphosphate = 5-methylaminomethyl-S-(2E)-geranyl-thiouridine(34) in tRNA + diphosphate. The enzyme catalyses 5-methylaminomethyl-S-(2E)-geranyl-thiouridine(34) in tRNA + selenophosphate + H(+) = 5-methylaminomethyl-2-(Se-phospho)selenouridine(34) in tRNA + (2E)-thiogeraniol. It catalyses the reaction 5-methylaminomethyl-2-(Se-phospho)selenouridine(34) in tRNA + H2O = 5-methylaminomethyl-2-selenouridine(34) in tRNA + phosphate. Its function is as follows. Involved in the post-transcriptional modification of the uridine at the wobble position (U34) of tRNA(Lys), tRNA(Glu) and tRNA(Gln). Catalyzes the conversion of 2-thiouridine (S2U-RNA) to 2-selenouridine (Se2U-RNA). Acts in a two-step process involving geranylation of 2-thiouridine (S2U) to S-geranyl-2-thiouridine (geS2U) and subsequent selenation of the latter derivative to 2-selenouridine (Se2U) in the tRNA chain. This is tRNA 2-selenouridine synthase from Aeromonas salmonicida (strain A449).